The primary structure comprises 181 residues: Mannose-specific lectin (181 aa).

The signal sequence occupies residues methionine 1 to alanine 30. Residues arginine 31 to arginine 140 enclose the Bulb-type lectin domain. Alpha-D-mannopyranose is bound by residues glutamine 56, aspartate 58, asparagine 60, tyrosine 64, tryptophan 71, alanine 72, asparagine 74, glutamine 88, aspartate 90, asparagine 92, tyrosine 96, valine 103, tryptophan 104, asparagine 107, asparagine 114, glutamine 120, aspartate 122, asparagine 124, tyrosine 128, and tryptophan 133. An intrachain disulfide couples cysteine 59 to cysteine 83.

As to quaternary structure, homodimer.

The protein localises to the secreted. Its function is as follows. Mannose-specific lectin. Shows agglutinating activity towards rabbit erythrocytes. However, it does not show agglutinating activity towards human erythrocytes. Has insecticidal activity against the cotton leafworm S.littoralis and the peach potato aphid M.persicae. Also displays antiviral activity and therefore may contribute to defense against infections. This is Mannose-specific lectin from Allium sativum (Garlic).